Reading from the N-terminus, the 152-residue chain is MSEEQQVQPQLALERIYTKDISFEVPGAQVFTKQWQPELNINLSSAAEKIDPTHFEVSLKVVVQANNDNETAFIVDVTQSGIFLIDNIEEDRLPYILGAYCPNILFPFLREAVNDLVTKGSFPQLLLTPINFDAEFEANMQRAQAAAVEGQA.

This sequence belongs to the SecB family. As to quaternary structure, homotetramer, a dimer of dimers. One homotetramer interacts with 1 SecA dimer.

The protein localises to the cytoplasm. Its function is as follows. One of the proteins required for the normal export of preproteins out of the cell cytoplasm. It is a molecular chaperone that binds to a subset of precursor proteins, maintaining them in a translocation-competent state. It also specifically binds to its receptor SecA. The chain is Protein-export protein SecB from Acinetobacter baumannii (strain AB307-0294).